Consider the following 250-residue polypeptide: Lectin 1 (250 aa).

An N-linked (GlcNAc...) asparagine; partial glycan is attached at asparagine 119. 2 residues coordinate Mn(2+): glutamate 128 and aspartate 130. Residues aspartate 130, tyrosine 132, asparagine 138, and aspartate 141 each contribute to the Ca(2+) site. Mn(2+)-binding residues include aspartate 141 and histidine 146.

It belongs to the leguminous lectin family.

Di-N-acetylchitobiose specific lectin. This Laburnum alpinum (Scotch laburnum) protein is Lectin 1.